A 544-amino-acid chain; its full sequence is Chaperonin GroEL 1 (544 aa).

Residues 30–33 (TLGP), lysine 51, 87–91 (DGTTT), glycine 415, and aspartate 494 contribute to the ATP site.

It belongs to the chaperonin (HSP60) family. As to quaternary structure, forms a cylinder of 14 subunits composed of two heptameric rings stacked back-to-back. Interacts with the co-chaperonin GroES.

Its subcellular location is the cytoplasm. The catalysed reaction is ATP + H2O + a folded polypeptide = ADP + phosphate + an unfolded polypeptide.. Its function is as follows. Together with its co-chaperonin GroES, plays an essential role in assisting protein folding. The GroEL-GroES system forms a nano-cage that allows encapsulation of the non-native substrate proteins and provides a physical environment optimized to promote and accelerate protein folding. The sequence is that of Chaperonin GroEL 1 from Syntrophus aciditrophicus (strain SB).